The sequence spans 407 residues: MNANSPPIAPAQPMHFEDLILEQGDLISKKLHLLSMQQFPPNAKKLLRQFSLSEVAQFLGVSQSTLKKLHLEGKGPLPQTSSSGRRSYSAEQMAELRQYLDQHGRSEARNYVPHRRSGEKLQVIAVVNFKGGSGKTTTAAHLAQYMALTGHRVLAVDLDPQASLSSLHGFQPELDMSPSLYEALRYDDQRRSISEIIQPTNFPGLDIVPANLELQEYEYDTPLAMSNKSSNDGKTFFTRISRALSEVNDRYDVVVIDCPPQLGYLTITALTAATSVLITIHPQMLDVMSMGQFLLMLGGILKPIRDVGAAVNLEWYRYLITRYEPTDGPQAQMVGFMQTLFHQFVLKNQMLKSTAVSDAGITKQTLYEVDKSQMTRSTYERAMDSLNAVNAEIVELVHASWGRKVVS.

It belongs to the ParA family.

This chain is Putative replication protein A, found in Sinorhizobium fredii (strain NBRC 101917 / NGR234).